The sequence spans 271 residues: MFRVSNFMVGLANTLVMLVGASAIGYSIYMFVHQGVTDCESAIRIPLLTTGLILFLVSLLGVIGSCFKENLAMVSYLIILFGGIVALMIFSIFLFFVTNKGAGRVVSGRGYKEYRTVDFSTWLNGFVGGKRWVGIRSCLAEANVCDDLSDGRVSQIADAFYHKNLSPIQSGCCKPPSDCNFEFRNATFWIPPSKNETAVAENGDCGTWSNVQTELCFNCNACKAGVLANIREKWRNLLVFNICLLILLITVYSCGCCARRNNRTARKSDSV.

The Cytoplasmic portion of the chain corresponds to 1–7; the sequence is MFRVSNF. Residues 8 to 28 form a helical membrane-spanning segment; that stretch reads MVGLANTLVMLVGASAIGYSI. Residues 29–44 lie on the Extracellular side of the membrane; that stretch reads YMFVHQGVTDCESAIR. Residues 45–65 form a helical membrane-spanning segment; it reads IPLLTTGLILFLVSLLGVIGS. Over 66–76 the chain is Cytoplasmic; that stretch reads CFKENLAMVSY. Residues 77–97 traverse the membrane as a helical segment; it reads LIILFGGIVALMIFSIFLFFV. The Extracellular portion of the chain corresponds to 98-236; it reads TNKGAGRVVS…LANIREKWRN (139 aa). 2 N-linked (GlcNAc...) asparagine glycosylation sites follow: asparagine 185 and asparagine 195. The chain crosses the membrane as a helical span at residues 237–257; sequence LLVFNICLLILLITVYSCGCC. At 258 to 271 the chain is on the cytoplasmic side; that stretch reads ARRNNRTARKSDSV.

It belongs to the tetraspanin (TM4SF) family.

It is found in the membrane. May be involved in the regulation of cell differentiation. The protein is Tetraspanin-11 (TET11) of Arabidopsis thaliana (Mouse-ear cress).